Here is a 351-residue protein sequence, read N- to C-terminus: MGFWSNLKDKLFGTKEERIAKKQAKIEAKEQRQLEKELIKKNKLNTYIAGLSKSNSSFNEHIKELQNKHNKIDEEFFEDLEEMLIMSDISIKLVQIIINECKKEVRNENITDPKLINEIIADKLFTIYTSNSVVDTTLNIKDNRLNVILVVGVNGSGKTTSISKIAKKLIDEGKKVLIAAGDTFRAAAVEQLEIWAKRVGADIVTPNENEVDPAAVVYRAIDIAKSKKYDILIVDTAGRLQNKVNLMNELAKINRVLASKIPDAPHESLLVLDATTGQNGVIQARVFKESTPLTGIILTKMDGTSKGGIVLTIKDEIGLFVKYIGLGEKVDDLAEFDLDSYIYGLTKGINE.

GTP is bound by residues 152 to 159, 235 to 239, and 299 to 302; these read GVNGSGKT, DTAGR, and TKMD.

Belongs to the GTP-binding SRP family. FtsY subfamily. In terms of assembly, part of the signal recognition particle protein translocation system, which is composed of SRP and FtsY.

It is found in the cell membrane. The protein localises to the cytoplasm. It catalyses the reaction GTP + H2O = GDP + phosphate + H(+). Its function is as follows. Involved in targeting and insertion of nascent membrane proteins into the cytoplasmic membrane. Acts as a receptor for the complex formed by the signal recognition particle (SRP) and the ribosome-nascent chain (RNC). The protein is Signal recognition particle receptor FtsY of Metamycoplasma hominis (strain ATCC 23114 / DSM 25592 / NBRC 14850 / NCTC 10111 / PG21) (Mycoplasma hominis).